The following is a 296-amino-acid chain: MKIIVPATSANLGAGFDSIGIAVNLYLTVEVLGESRDWKIDHDLGENIPTDERNLLLTTLSAVLEDKNVALSAKFHLKMTSEVPLARGLGSSSSVIIAGIELANQLAKLNLTSDEKLKLACEIEGHPDNVAPALLGNLVIASTVAGKTSHIVADFPSCALLAFVPDYELKTVESRKVLPNELTYKEAVAASSIANVLTASLLTNNLEVAGQMMEADRFHESYRASLIPELQLLREIGHEFGAYGTYLSGAGPTVMLLVPDDKLTLLTEKIMEKNLTGHLYPLKIDNKGLQVEESVF.

Residue 84–94 (PLARGLGSSSS) coordinates ATP.

It belongs to the GHMP kinase family. Homoserine kinase subfamily.

It localises to the cytoplasm. It catalyses the reaction L-homoserine + ATP = O-phospho-L-homoserine + ADP + H(+). It functions in the pathway amino-acid biosynthesis; L-threonine biosynthesis; L-threonine from L-aspartate: step 4/5. Its function is as follows. Catalyzes the ATP-dependent phosphorylation of L-homoserine to L-homoserine phosphate. This chain is Homoserine kinase (thrB), found in Lactococcus lactis subsp. cremoris (Streptococcus cremoris).